A 195-amino-acid chain; its full sequence is MSGGKPRSNTRTVAMLAGVVVLMGALSWAAVPFYSWFCKVTGFAGTTNVAEAASDTVLDEKIRVRFDANADSNLGWTFRPMQREMELKIGENAIAFYEAINNTDEPVTGTASYNVAPDAAGYFFNKIECFCFTEQTLQPGERVEMPVSFFVDADLVNDRDAGRIRDITLSYTFHRTDPPAPKQAALDAKTEPTVN.

Topologically, residues 1-7 (MSGGKPR) are cytoplasmic. The helical; Signal-anchor for type II membrane protein transmembrane segment at 8–30 (SNTRTVAMLAGVVVLMGALSWAA) threads the bilayer. The Periplasmic segment spans residues 31-195 (VPFYSWFCKV…LDAKTEPTVN (165 aa)).

The protein belongs to the COX11/CtaG family.

It is found in the cell inner membrane. Exerts its effect at some terminal stage of cytochrome c oxidase synthesis, probably by being involved in the insertion of the copper B into subunit I. The sequence is that of Cytochrome c oxidase assembly protein CtaG from Paracoccus denitrificans (strain Pd 1222).